The sequence spans 122 residues: Large ribosomal subunit protein uL18 (122 aa).

It belongs to the universal ribosomal protein uL18 family. Part of the 50S ribosomal subunit; part of the 5S rRNA/L5/L18/L25 subcomplex. Contacts the 5S and 23S rRNAs.

In terms of biological role, this is one of the proteins that bind and probably mediate the attachment of the 5S RNA into the large ribosomal subunit, where it forms part of the central protuberance. In Dictyoglomus turgidum (strain DSM 6724 / Z-1310), this protein is Large ribosomal subunit protein uL18.